Here is a 472-residue protein sequence, read N- to C-terminus: Transcription factor TGAL1 (472 aa).

Positions 136–190 (WGESTIADTSPRTDTSTDPDTDERNQMFEQGQLAAPTASDSSDRSKDKLDHKTLR) are disordered. A compositionally biased stretch (low complexity) spans 143–153 (DTSPRTDTSTD). Residues 176 to 187 (SSDRSKDKLDHK) show a composition bias toward basic and acidic residues. A bZIP domain is found at 185–229 (DHKTLRRLAQNREAARKSRLRKKAYIQNLESSRLKLTQIEQELQR). The basic motif stretch occupies residues 187–207 (KTLRRLAQNREAARKSRLRKK). The interval 213–227 (LESSRLKLTQIEQEL) is leucine-zipper. The DOG1 domain occupies 252–469 (ALAFDMEYAR…RALSSLWLAR (218 aa)).

Belongs to the bZIP family. In terms of assembly, isoforms 1 and 2 interact with NPR2/NH2. Isoform 2 interacts with NPR1/NH1 and NPR3/NH3.

It localises to the nucleus. Its function is as follows. Transcriptional regulator involved in defense response. This is Transcription factor TGAL1 from Oryza sativa subsp. japonica (Rice).